The following is a 1741-amino-acid chain: DNA-directed RNA polymerase III subunit RPC1 (1741 aa).

Residues Cys-79, Cys-82, Cys-89, His-92, Cys-119, Cys-122, and Cys-160 each coordinate Zn(2+). Residues Asp-722, Asp-724, and Asp-726 each coordinate Mg(2+). The interval 1099–1111 (PFEFLAHARAGRD) is bridging helix. Residues 1719 to 1741 (RHANKRSWSRGKERHASLKPKNR) are disordered.

It belongs to the RNA polymerase beta' chain family. Component of the RNA polymerase III (Pol III) complex consisting of 17 subunits.

The protein localises to the nucleus. It carries out the reaction RNA(n) + a ribonucleoside 5'-triphosphate = RNA(n+1) + diphosphate. Functionally, DNA-dependent RNA polymerase catalyzes the transcription of DNA into RNA using the four ribonucleoside triphosphates as substrates. Largest and catalytic core component of RNA polymerase III which synthesizes small RNAs, such as 5S rRNA and tRNAs. Forms the polymerase active center together with the second largest subunit. A single-stranded DNA template strand of the promoter is positioned within the central active site cleft of Pol III. A bridging helix emanates from RPC1 and crosses the cleft near the catalytic site and is thought to promote translocation of Pol III by acting as a ratchet that moves the RNA-DNA hybrid through the active site by switching from straight to bent conformations at each step of nucleotide addition. The polypeptide is DNA-directed RNA polymerase III subunit RPC1 (RPOA3) (Giardia intestinalis (Giardia lamblia)).